The sequence spans 351 residues: Glycerol-3-phosphate dehydrogenase [NAD(P)+] (351 aa).

NADPH contacts are provided by S18, W19, R38, and K122. Residues K122, G153, and S155 each contribute to the sn-glycerol 3-phosphate site. A157 contributes to the NADPH binding site. Sn-glycerol 3-phosphate is bound by residues K208, D261, S271, R272, and N273. K208 serves as the catalytic Proton acceptor. R272 is a binding site for NADPH. E297 is a binding site for NADPH.

The protein belongs to the NAD-dependent glycerol-3-phosphate dehydrogenase family.

It localises to the cytoplasm. It catalyses the reaction sn-glycerol 3-phosphate + NAD(+) = dihydroxyacetone phosphate + NADH + H(+). The catalysed reaction is sn-glycerol 3-phosphate + NADP(+) = dihydroxyacetone phosphate + NADPH + H(+). It participates in membrane lipid metabolism; glycerophospholipid metabolism. In terms of biological role, catalyzes the reduction of the glycolytic intermediate dihydroxyacetone phosphate (DHAP) to sn-glycerol 3-phosphate (G3P), the key precursor for phospholipid synthesis. This Bordetella bronchiseptica (strain ATCC BAA-588 / NCTC 13252 / RB50) (Alcaligenes bronchisepticus) protein is Glycerol-3-phosphate dehydrogenase [NAD(P)+].